Reading from the N-terminus, the 350-residue chain is Probable dTDP-glucose 4,6-dehydratase (350 aa).

Residue 7 to 13 (GGAGFIG) participates in NAD(+) binding. Residue Thr-132 coordinates substrate. Catalysis depends on Asp-133, which acts as the Proton donor. Residues Glu-134 and Tyr-157 each act as proton acceptor in the active site.

Belongs to the NAD(P)-dependent epimerase/dehydratase family. dTDP-glucose dehydratase subfamily. It depends on NAD(+) as a cofactor.

The catalysed reaction is dTDP-alpha-D-glucose = dTDP-4-dehydro-6-deoxy-alpha-D-glucose + H2O. Its pathway is carbohydrate biosynthesis; dTDP-L-rhamnose biosynthesis. In Sinorhizobium fredii (strain NBRC 101917 / NGR234), this protein is Probable dTDP-glucose 4,6-dehydratase.